A 365-amino-acid chain; its full sequence is Casein kinase I homolog hhp1 (365 aa).

The region spanning 11–279 is the Protein kinase domain; sequence YRIGRKIGSG…YLRKLFRDLF (269 aa). Residues 17–25 and K40 each bind ATP; that span reads IGSGSFGDI. The active-site Proton acceptor is D130. Residues 301 to 311 show a composition bias toward low complexity; sequence DQQHQQQLQQQ. The interval 301–365 is disordered; it reads DQQHQQQLQQ…TGAQYINRPN (65 aa). Polar residues predominate over residues 343 to 365; the sequence is INTTVPVINDPSATGAQYINRPN.

It belongs to the protein kinase superfamily. CK1 Ser/Thr protein kinase family. Casein kinase I subfamily.

It localises to the nucleus. The enzyme catalyses L-seryl-[protein] + ATP = O-phospho-L-seryl-[protein] + ADP + H(+). It catalyses the reaction L-threonyl-[protein] + ATP = O-phospho-L-threonyl-[protein] + ADP + H(+). Its function is as follows. Involved in DNA repair. Has a probable role in repairing alkylated DNA and may regulate the activity of protein(s) involved in double strand break repair caused by gamma rays. This Schizosaccharomyces pombe (strain 972 / ATCC 24843) (Fission yeast) protein is Casein kinase I homolog hhp1 (hhp1).